The sequence spans 341 residues: Methionine import ATP-binding protein MetN (341 aa).

In terms of domain architecture, ABC transporter spans 2-237 (IELCGLKKSF…PESLARKMLY (236 aa)). 34–41 (GKSGAGKS) provides a ligand contact to ATP.

It belongs to the ABC transporter superfamily. Methionine importer (TC 3.A.1.24) family. As to quaternary structure, the complex is composed of two ATP-binding proteins (MetN), two transmembrane proteins (MetI) and a solute-binding protein (MetQ).

The protein localises to the cell inner membrane. It carries out the reaction L-methionine(out) + ATP + H2O = L-methionine(in) + ADP + phosphate + H(+). It catalyses the reaction D-methionine(out) + ATP + H2O = D-methionine(in) + ADP + phosphate + H(+). Its function is as follows. Part of the ABC transporter complex MetNIQ involved in methionine import. Responsible for energy coupling to the transport system. The polypeptide is Methionine import ATP-binding protein MetN (Legionella pneumophila (strain Paris)).